We begin with the raw amino-acid sequence, 181 residues long: Endoribonuclease YbeY (181 aa).

The Zn(2+) site is built by His-140, His-144, and His-150.

Belongs to the endoribonuclease YbeY family. Requires Zn(2+) as cofactor.

It localises to the cytoplasm. Functionally, single strand-specific metallo-endoribonuclease involved in late-stage 70S ribosome quality control and in maturation of the 3' terminus of the 16S rRNA. The polypeptide is Endoribonuclease YbeY (Dinoroseobacter shibae (strain DSM 16493 / NCIMB 14021 / DFL 12)).